Consider the following 468-residue polypeptide: Kynureninase 2 (468 aa).

Pyridoxal 5'-phosphate contacts are provided by residues L134, T135, 162–165, D247, H250, and Y272; that span reads FPSD. N6-(pyridoxal phosphate)lysine is present on K273. The pyridoxal 5'-phosphate site is built by W312 and N340.

Belongs to the kynureninase family. As to quaternary structure, homodimer. Requires pyridoxal 5'-phosphate as cofactor.

The protein resides in the cytoplasm. It carries out the reaction L-kynurenine + H2O = anthranilate + L-alanine + H(+). It catalyses the reaction 3-hydroxy-L-kynurenine + H2O = 3-hydroxyanthranilate + L-alanine + H(+). Its pathway is amino-acid degradation; L-kynurenine degradation; L-alanine and anthranilate from L-kynurenine: step 1/1. It functions in the pathway cofactor biosynthesis; NAD(+) biosynthesis; quinolinate from L-kynurenine: step 2/3. Functionally, catalyzes the cleavage of L-kynurenine (L-Kyn) and L-3-hydroxykynurenine (L-3OHKyn) into anthranilic acid (AA) and 3-hydroxyanthranilic acid (3-OHAA), respectively. The protein is Kynureninase 2 (bna5-2) of Aspergillus oryzae (strain ATCC 42149 / RIB 40) (Yellow koji mold).